Consider the following 347-residue polypeptide: Microtubule-associated protein Jupiter (347 aa).

A compositionally biased stretch (polar residues) spans 1–14 (MISNFDCTDNQASS). A disordered region spans residues 1–33 (MISNFDCTDNQASSKVLRPPGGGSSDIFGSEMP). Ser24 is modified (phosphoserine). 2 positions are modified to phosphothreonine: Thr35 and Thr96. Ser105, Ser134, and Ser145 each carry phosphoserine. Disordered stretches follow at residues 127–193 (HYNG…PTPP) and 303–347 (GNPV…SGLW). Low complexity predominate over residues 132 to 145 (SGSVSSASSSVSSS). The segment covering 146 to 164 (TENLKMNSGSRSVFRNMST) has biased composition (polar residues). The segment covering 181–193 (PPSPVPIEVPTPP) has biased composition (pro residues).

The protein belongs to the MAP Jupiter family.

The protein resides in the nucleus. It is found in the cytoplasm. The protein localises to the cytoskeleton. Its subcellular location is the spindle. Functionally, binds to all microtubule populations. The protein is Microtubule-associated protein Jupiter of Drosophila yakuba (Fruit fly).